Here is a 244-residue protein sequence, read N- to C-terminus: Small ribosomal subunit protein uS2 (244 aa).

The tract at residues 224–244 is disordered; it reads GQQGSDEAEEAEEAAEEVVAE. Residues 229-244 show a composition bias toward acidic residues; the sequence is DEAEEAEEAAEEVVAE.

Belongs to the universal ribosomal protein uS2 family.

This chain is Small ribosomal subunit protein uS2, found in Desulfitobacterium hafniense (strain DSM 10664 / DCB-2).